A 116-amino-acid polypeptide reads, in one-letter code: Beta-2-microglobulin (116 aa).

Positions 1–19 are cleaved as a signal peptide; the sequence is MKFLLSFVVLAVFSASAFA. One can recognise an Ig-like C1-type domain in the interval 24–111; the sequence is PKIQVYSRNP…RHLKETKNIS (88 aa). The cysteines at positions 44 and 99 are disulfide-linked.

The protein belongs to the beta-2-microglobulin family. Heterodimer of an alpha chain and a beta chain. Beta-2-microglobulin is the beta-chain of major histocompatibility complex class I molecules.

The protein localises to the secreted. Component of the class I major histocompatibility complex (MHC). Involved in the presentation of peptide antigens to the immune system. The chain is Beta-2-microglobulin (b2m) from Ictalurus punctatus (Channel catfish).